Reading from the N-terminus, the 356-residue chain is Uroporphyrinogen decarboxylase (356 aa).

Substrate is bound by residues 27-31, Asp77, Tyr154, Thr209, and His327; that span reads RQAGR.

It belongs to the uroporphyrinogen decarboxylase family. As to quaternary structure, homodimer.

The protein localises to the cytoplasm. It carries out the reaction uroporphyrinogen III + 4 H(+) = coproporphyrinogen III + 4 CO2. The protein operates within porphyrin-containing compound metabolism; protoporphyrin-IX biosynthesis; coproporphyrinogen-III from 5-aminolevulinate: step 4/4. Catalyzes the decarboxylation of four acetate groups of uroporphyrinogen-III to yield coproporphyrinogen-III. The protein is Uroporphyrinogen decarboxylase of Cellvibrio japonicus (strain Ueda107) (Pseudomonas fluorescens subsp. cellulosa).